A 487-amino-acid polypeptide reads, in one-letter code: Cysteine--tRNA ligase (487 aa).

C27 serves as a coordination point for Zn(2+). The 'HIGH' region signature appears at 29–39; sequence VTVYDLCHIGH. Zn(2+)-binding residues include C211, H236, and E240. The short motif at 268 to 272 is the 'KMSKS' region element; the sequence is KMSKS. K271 contributes to the ATP binding site.

This sequence belongs to the class-I aminoacyl-tRNA synthetase family. In terms of assembly, monomer. It depends on Zn(2+) as a cofactor.

The protein localises to the cytoplasm. It catalyses the reaction tRNA(Cys) + L-cysteine + ATP = L-cysteinyl-tRNA(Cys) + AMP + diphosphate. The chain is Cysteine--tRNA ligase from Thermodesulfovibrio yellowstonii (strain ATCC 51303 / DSM 11347 / YP87).